Here is a 31-residue protein sequence, read N- to C-terminus: Cytochrome b6-f complex subunit 6 (31 aa).

Residues 4–24 form a helical membrane-spanning segment; it reads ITSYFGFLLVALTITSALFIG.

The protein belongs to the PetL family. In terms of assembly, the 4 large subunits of the cytochrome b6-f complex are cytochrome b6, subunit IV (17 kDa polypeptide, PetD), cytochrome f and the Rieske protein, while the 4 small subunits are PetG, PetL, PetM and PetN. The complex functions as a dimer.

The protein localises to the plastid. It localises to the chloroplast thylakoid membrane. Functionally, component of the cytochrome b6-f complex, which mediates electron transfer between photosystem II (PSII) and photosystem I (PSI), cyclic electron flow around PSI, and state transitions. PetL is important for photoautotrophic growth as well as for electron transfer efficiency and stability of the cytochrome b6-f complex. In Pelargonium hortorum (Common geranium), this protein is Cytochrome b6-f complex subunit 6.